The sequence spans 111 residues: Large ribosomal subunit protein P1 (111 aa).

The tract at residues 75 to 111 (AAAPAAEEKAEEEKKEEEEEKKEEEVDLSGLSGMFGF) is disordered. Over residues 88–101 (KKEEEEEKKEEEVD) the composition is skewed to acidic residues.

The protein belongs to the eukaryotic ribosomal protein P1/P2 family. In terms of assembly, part of the 50S ribosomal subunit. Homodimer, it forms part of the ribosomal stalk which helps the ribosome interact with GTP-bound translation factors. Forms a heptameric uL10/P0(P1)2(P1)2(P1)2 complex, where uL10/P0 forms an elongated spine to which the P1 dimers bind in a sequential fashion.

In terms of biological role, forms part of the ribosomal stalk, playing a central role in the interaction of the ribosome with GTP-bound translation factors. The sequence is that of Large ribosomal subunit protein P1 from Aeropyrum pernix (strain ATCC 700893 / DSM 11879 / JCM 9820 / NBRC 100138 / K1).